Reading from the N-terminus, the 184-residue chain is ATP synthase subunit b, chloroplastic (184 aa).

A helical membrane pass occupies residues 27 to 49; sequence LATNPINLSVVLGVLIFFGKGVL.

Belongs to the ATPase B chain family. In terms of assembly, F-type ATPases have 2 components, F(1) - the catalytic core - and F(0) - the membrane proton channel. F(1) has five subunits: alpha(3), beta(3), gamma(1), delta(1), epsilon(1). F(0) has four main subunits: a(1), b(1), b'(1) and c(10-14). The alpha and beta chains form an alternating ring which encloses part of the gamma chain. F(1) is attached to F(0) by a central stalk formed by the gamma and epsilon chains, while a peripheral stalk is formed by the delta, b and b' chains.

It localises to the plastid. The protein resides in the chloroplast thylakoid membrane. F(1)F(0) ATP synthase produces ATP from ADP in the presence of a proton or sodium gradient. F-type ATPases consist of two structural domains, F(1) containing the extramembraneous catalytic core and F(0) containing the membrane proton channel, linked together by a central stalk and a peripheral stalk. During catalysis, ATP synthesis in the catalytic domain of F(1) is coupled via a rotary mechanism of the central stalk subunits to proton translocation. In terms of biological role, component of the F(0) channel, it forms part of the peripheral stalk, linking F(1) to F(0). This Chloranthus spicatus (Chulantree) protein is ATP synthase subunit b, chloroplastic.